We begin with the raw amino-acid sequence, 225 residues long: Pyrimidine 5'-nucleotidase YjjG (225 aa).

Asp-9 serves as the catalytic Nucleophile.

It belongs to the HAD-like hydrolase superfamily. YjjG family. Monomer, homodimer and possibly homotetramer in solution. The cofactor is Mn(2+). Mg(2+) serves as cofactor. It depends on Co(2+) as a cofactor.

It localises to the cytoplasm. It catalyses the reaction a ribonucleoside 5'-phosphate + H2O = a ribonucleoside + phosphate. It carries out the reaction a 2'-deoxyribonucleoside 5'-phosphate + H2O = a 2'-deoxyribonucleoside + phosphate. The enzyme catalyses UMP + H2O = uridine + phosphate. The catalysed reaction is dUMP + H2O = 2'-deoxyuridine + phosphate. It catalyses the reaction dTMP + H2O = thymidine + phosphate. Its activity is regulated as follows. In contrast to nucleotidases from other families, is not inhibited by ribo- and deoxyribonucleoside di- and triphosphates. In terms of biological role, nucleotidase that shows high phosphatase activity toward non-canonical pyrimidine nucleotides and three canonical nucleoside 5'-monophosphates (UMP, dUMP, and dTMP), and very low activity against TDP, IMP, UDP, GMP, dGMP, AMP, dAMP, and 6-phosphogluconate. Appears to function as a house-cleaning nucleotidase in vivo, since the general nucleotidase activity of YjjG allows it to protect cells against non-canonical pyrimidine derivatives such as 5-fluoro-2'-deoxyuridine, 5-fluorouridine, 5-fluoroorotate, 5-fluorouracil, and 5-aza-2'-deoxycytidine, and prevents the incorporation of potentially mutagenic nucleotides into DNA. Its dUMP phosphatase activity that catalyzes the hydrolysis of dUMP to deoxyuridine is necessary for thymine utilization via the thymine salvage pathway. Is strictly specific to substrates with 5'-phosphates and shows no activity against nucleoside 2'- or 3'-monophosphates. In Escherichia coli (strain K12), this protein is Pyrimidine 5'-nucleotidase YjjG (yjjG).